A 147-amino-acid chain; its full sequence is Phosphoribosyl-AMP cyclohydrolase (147 aa).

Asp-89 provides a ligand contact to Mg(2+). Cys-90 lines the Zn(2+) pocket. Mg(2+)-binding residues include Asp-91 and Asp-93. Zn(2+) contacts are provided by Cys-106 and Cys-113.

This sequence belongs to the PRA-CH family. Homodimer. The cofactor is Mg(2+). It depends on Zn(2+) as a cofactor.

It localises to the cytoplasm. It catalyses the reaction 1-(5-phospho-beta-D-ribosyl)-5'-AMP + H2O = 1-(5-phospho-beta-D-ribosyl)-5-[(5-phospho-beta-D-ribosylamino)methylideneamino]imidazole-4-carboxamide. Its pathway is amino-acid biosynthesis; L-histidine biosynthesis; L-histidine from 5-phospho-alpha-D-ribose 1-diphosphate: step 3/9. In terms of biological role, catalyzes the hydrolysis of the adenine ring of phosphoribosyl-AMP. The protein is Phosphoribosyl-AMP cyclohydrolase of Nitrobacter hamburgensis (strain DSM 10229 / NCIMB 13809 / X14).